The chain runs to 246 residues: Type III pantothenate kinase (246 aa).

6-13 (DVGNTHSV) contributes to the ATP binding site. 103–106 (GADR) lines the substrate pocket. The active-site Proton acceptor is the Asp105. K(+) is bound at residue Asp125. Thr128 lines the ATP pocket. Residue Thr179 coordinates substrate.

The protein belongs to the type III pantothenate kinase family. In terms of assembly, homodimer. The cofactor is NH4(+). K(+) is required as a cofactor.

The protein resides in the cytoplasm. It catalyses the reaction (R)-pantothenate + ATP = (R)-4'-phosphopantothenate + ADP + H(+). It functions in the pathway cofactor biosynthesis; coenzyme A biosynthesis; CoA from (R)-pantothenate: step 1/5. Catalyzes the phosphorylation of pantothenate (Pan), the first step in CoA biosynthesis. The protein is Type III pantothenate kinase of Thermotoga sp. (strain RQ2).